We begin with the raw amino-acid sequence, 344 residues long: GTPase Obg (344 aa).

The region spanning 1–159 is the Obg domain; the sequence is MKFLDEAKVY…MWLILRLKLI (159 aa). The OBG-type G domain occupies 160–327; sequence ADAGLVGLPN…ALRAIQAQLD (168 aa). Residues 166 to 173, 191 to 195, 212 to 215, 279 to 282, and 308 to 310 each bind GTP; these read GLPNAGKS, FTTLH, DIPG, SKAD, and SAA. 2 residues coordinate Mg(2+): Ser-173 and Thr-193.

This sequence belongs to the TRAFAC class OBG-HflX-like GTPase superfamily. OBG GTPase family. Monomer. It depends on Mg(2+) as a cofactor.

It localises to the cytoplasm. Functionally, an essential GTPase which binds GTP, GDP and possibly (p)ppGpp with moderate affinity, with high nucleotide exchange rates and a fairly low GTP hydrolysis rate. Plays a role in control of the cell cycle, stress response, ribosome biogenesis and in those bacteria that undergo differentiation, in morphogenesis control. This chain is GTPase Obg, found in Methylorubrum populi (strain ATCC BAA-705 / NCIMB 13946 / BJ001) (Methylobacterium populi).